The chain runs to 175 residues: DASH complex subunit DAM1 (175 aa).

The interval 1–39 is disordered; it reads MAPEDTNPQSSHRRTRSTSRSRPTTPLRPSSRSSFRSSA. A compositionally biased stretch (low complexity) spans 20–39; the sequence is RSRPTTPLRPSSRSSFRSSA.

Belongs to the DASH complex DAM1 family. Component of the DASH complex consisting of ASK1, DAD1, DAD2, DAD3, DAD4, DAM1, DUO1, HSK3, SPC19 and SPC34, with a stoichiometry of one copy of each subunit per complex. Multiple DASH complexes oligomerize to form a ring that encircles spindle microtubules and organizes the rod-like NDC80 complexes of the outer kinetochore. DASH complex oligomerization strengthens microtubule attachments. On cytoplasmic microtubules, DASH complexes appear to form patches instead of rings.

It localises to the chromosome. The protein resides in the centromere. The protein localises to the kinetochore. It is found in the cytoplasm. Its subcellular location is the cytoskeleton. It localises to the spindle. The protein resides in the nucleus. Its function is as follows. Component of the DASH complex that connects microtubules with kinetochores and couples microtubule depolymerisation to chromosome movement; it is involved in retrieving kinetochores to the spindle poles before their re-orientation on the spindle in early mitosis and allows microtubule depolymerization to pull chromosomes apart and resist detachment during anaphase. Kinetochores, consisting of a centromere-associated inner segment and a microtubule-contacting outer segment, play a crucial role in chromosome segregation by mediating the physical connection between centromeric DNA and microtubules. Kinetochores also serve as an input point for the spindle assembly checkpoint, which delays anaphase until all chromosomes have bioriented on the mitotic spindle. In Chaetomium thermophilum (strain DSM 1495 / CBS 144.50 / IMI 039719) (Thermochaetoides thermophila), this protein is DASH complex subunit DAM1.